A 117-amino-acid chain; its full sequence is Large ribosomal subunit protein bL20 (117 aa).

This sequence belongs to the bacterial ribosomal protein bL20 family.

Functionally, binds directly to 23S ribosomal RNA and is necessary for the in vitro assembly process of the 50S ribosomal subunit. It is not involved in the protein synthesizing functions of that subunit. The chain is Large ribosomal subunit protein bL20 from Aliivibrio salmonicida (strain LFI1238) (Vibrio salmonicida (strain LFI1238)).